The chain runs to 78 residues: Large ribosomal subunit protein bL28 (78 aa).

The disordered stretch occupies residues 1 to 26 (MSAYCQVTGRKPSFGKSVSHSHRRTN).

It belongs to the bacterial ribosomal protein bL28 family.

The sequence is that of Large ribosomal subunit protein bL28 from Corynebacterium jeikeium (strain K411).